Reading from the N-terminus, the 103-residue chain is Large ribosomal subunit protein bL21 (103 aa).

It belongs to the bacterial ribosomal protein bL21 family. In terms of assembly, part of the 50S ribosomal subunit. Contacts protein L20.

Its function is as follows. This protein binds to 23S rRNA in the presence of protein L20. In Ralstonia pickettii (strain 12J), this protein is Large ribosomal subunit protein bL21.